A 371-amino-acid chain; its full sequence is Alanine dehydrogenase (371 aa).

The substrate site is built by Arg15 and Lys75. The active-site Proton donor/acceptor is the His96. Residues Ser134, 178-179, Asp198, Ser220, 239-240, 267-270, Arg279, and 298-301 each bind NAD(+); these read TA, VL, IAID, and VANM. Asp270 acts as the Proton donor/acceptor in catalysis.

It belongs to the AlaDH/PNT family. As to quaternary structure, homohexamer. Trimer of dimers.

Its subcellular location is the cytoplasm. The enzyme catalyses L-alanine + NAD(+) + H2O = pyruvate + NH4(+) + NADH + H(+). It participates in amino-acid degradation; L-alanine degradation via dehydrogenase pathway; NH(3) and pyruvate from L-alanine: step 1/1. Its function is as follows. Catalyzes the reversible reductive amination of pyruvate to L-alanine. Required for proficient utilization of D- or L-alanine as a nitrogen source. May be required for the adaptation from aerobic growth to anaerobic dormancy. It could be involved in the maintenance of the NAD pool during the shift to an anaerobic dormant state in which oxygen as a terminal electron acceptor becomes limiting. In Mycolicibacterium smegmatis (strain ATCC 700084 / mc(2)155) (Mycobacterium smegmatis), this protein is Alanine dehydrogenase.